We begin with the raw amino-acid sequence, 361 residues long: 3-dehydroquinate synthase (361 aa).

Belongs to the archaeal-type DHQ synthase family.

The enzyme catalyses 2-amino-2,3,7-trideoxy-D-lyxo-hept-6-ulosonate + NAD(+) + H2O = 3-dehydroquinate + NH4(+) + NADH + H(+). In terms of biological role, catalyzes the oxidative deamination and cyclization of 2-amino-3,7-dideoxy-D-threo-hept-6-ulosonic acid (ADH) to yield 3-dehydroquinate (DHQ), which is fed into the canonical shikimic pathway of aromatic amino acid biosynthesis. This chain is 3-dehydroquinate synthase, found in Methanococcus vannielii (strain ATCC 35089 / DSM 1224 / JCM 13029 / OCM 148 / SB).